The chain runs to 554 residues: Heterochromatin protein 1-binding protein 3 (554 aa).

N-acetylalanine is present on A2. The residue at position 6 (S6) is a Phosphoserine. Disordered regions lie at residues 30–136 (LGEK…KTIP) and 142–161 (SASQLARAQRQTPMASSPRP). A Phosphothreonine modification is found at T51. A compositionally biased stretch (acidic residues) spans 60 to 71 (GEEEKPEPDGSS). A Glycyl lysine isopeptide (Lys-Gly) (interchain with G-Cter in SUMO2) cross-link involves residue K64. 2 positions are modified to phosphothreonine: E72 and T85. A compositionally biased stretch (polar residues) spans 72–93 (EESISTVEEQENETPPATSSEA). Basic and acidic residues predominate over residues 94–129 (EQPKGEPESGEKEENNNKSAEEPKKDEKDQSKEKEK). Residue K97 forms a Glycyl lysine isopeptide (Lys-Gly) (interchain with G-Cter in SUMO2) linkage. Polar residues predominate over residues 142–156 (SASQLARAQRQTPMA). Phosphoserine occurs at positions 144, 157, and 158. Residues 159-234 (PRPKMDAILT…GASGSFVVVQ (76 aa)) form the H15 1 domain. N6-acetyllysine is present on K192. Positions 229–254 (SFVVVQKSKPPQKSKNRKKGSALDPE) are disordered. The span at 238-248 (PPQKSKNRKKG) shows a compositional bias: basic residues. S249 carries the post-translational modification Phosphoserine. A PxVxL motif motif is present at residues 255-259 (PQVKL). H15 domains lie at 255–330 (PQVK…QLKK) and 337–413 (LGGS…QLSF). K258 participates in a covalent cross-link: Glycyl lysine isopeptide (Lys-Gly) (interchain with G-Cter in SUMO2). The interval 420–554 (GVLFPKKESG…AMKKSFKTKK (135 aa)) is disordered. Acidic residues predominate over residues 430–451 (GSDDEDEDDDDDESSEDSEDEE). A phosphoserine mark is found at S443, S444, and S447. Over residues 464 to 475 (AKSQGKTASMKQ) the composition is skewed to polar residues. Basic residues-rich tracts occupy residues 490 to 511 (GKVRPLPKKAPPKAKTPARKAR) and 544 to 554 (SAMKKSFKTKK).

As to quaternary structure, interacts (via PxVxL motif) with CBX5 (via Trp-174).

It localises to the nucleus. The protein localises to the chromosome. In terms of biological role, component of heterochromatin that maintains heterochromatin integrity during G1/S progression and regulates the duration of G1 phase to critically influence cell proliferative capacity. May play a role in hypoxia-induced oncogenesis. The polypeptide is Heterochromatin protein 1-binding protein 3 (Hp1bp3) (Mus musculus (Mouse)).